We begin with the raw amino-acid sequence, 513 residues long: Interferon-induced, double-stranded RNA-activated protein kinase (513 aa).

Ala2 carries the post-translational modification N-acetylalanine. In terms of domain architecture, DRBM 1 spans 8–76 (FYVDKLNKYS…AKLAVEILDN (69 aa)). Residue Lys68 forms a Glycyl lysine isopeptide (Lys-Gly) (interchain with G-Cter in ISG15) linkage. The residue at position 82 (Ser82) is a Phosphoserine. Thr84 bears the Phosphothreonine mark. The 68-residue stretch at 95–162 (NYIGLVNSFA…AKNAYQKLSE (68 aa)) folds into the DRBM 2 domain. Residue Tyr96 is modified to Phosphotyrosine; by autocatalysis. Lys154 is covalently cross-linked (Glycyl lysine isopeptide (Lys-Gly) (interchain with G-Cter in ISG15)). Tyr157 carries the phosphotyrosine; by autocatalysis modification. The residue at position 227 (Thr227) is a Phosphothreonine. The segment at 235–513 (DFEDIEEIGS…ISEKKKRNTC (279 aa)) is interaction with TRAF5. Residues 236–502 (FEDIEEIGSG…EILKTLAEWK (267 aa)) form the Protein kinase domain. 242-250 (IGSGGFGQV) serves as a coordination point for ATP. Tyr262 is subject to Phosphotyrosine; by autocatalysis. Lys265 contacts ATP. The Proton acceptor role is filled by Asp373. Thr406 and Thr411 each carry phosphothreonine; by autocatalysis. The residue at position 416 (Ser416) is a Phosphoserine.

This sequence belongs to the protein kinase superfamily. Ser/Thr protein kinase family. GCN2 subfamily. In terms of assembly, homodimer. Interacts with DNAJC3. Interacts with STRBP. Forms a complex with FANCA, FANCC, FANCG and HSP70. Interacts with ADAR/ADAR1. The inactive form interacts with NCK1 and GSN. Interacts (via the kinase catalytic domain) with STAT3 (via SH2 domain), TRAF2 (C-terminus), TRAF5 (C-terminus) and TRAF6 (C-terminus). Interacts with MAP2K6, IKBKB/IKKB, IRS1, NPM1, TARBP2, NLRP1, NLRP3, NLRC4 and AIM2. Interacts (via DRBM 1 domain) with DUS2L (via DRBM domain). Interacts with DHX9 (via N-terminus) and this interaction is dependent upon activation of the kinase. In terms of processing, autophosphorylated on several Ser, Thr and Tyr residues. Autophosphorylation of Thr-411 is dependent on Thr-406 and is stimulated by dsRNA binding and dimerization. Autophosphorylation apparently leads to the activation of the kinase. Tyrosine autophosphorylation is essential for efficient dsRNA-binding, dimerization, and kinase activation.

It localises to the cytoplasm. It is found in the nucleus. The protein resides in the perinuclear region. It catalyses the reaction L-seryl-[protein] + ATP = O-phospho-L-seryl-[protein] + ADP + H(+). The enzyme catalyses L-threonyl-[protein] + ATP = O-phospho-L-threonyl-[protein] + ADP + H(+). It carries out the reaction L-tyrosyl-[protein] + ATP = O-phospho-L-tyrosyl-[protein] + ADP + H(+). With respect to regulation, initially produced in an inactive form and is activated by binding to viral dsRNA, which causes dimerization and autophosphorylation in the activation loop and stimulation of function. ISGylation can activate it in the absence of viral infection. Can also be activated by heparin, pro-inflammatory stimuli, growth factors, cytokines, oxidative stress and the cellular protein PRKRA. Activity is markedly stimulated by manganese ions. Activation is blocked by the cellular proteins TARBP2, DUS2L, NPM1, NCK1 and ADAR. Functionally, IFN-induced dsRNA-dependent serine/threonine-protein kinase that phosphorylates the alpha subunit of eukaryotic translation initiation factor 2 (EIF2S1/eIF-2-alpha) and plays a key role in the innate immune response to viral infection. Inhibits viral replication via the integrated stress response (ISR): EIF2S1/eIF-2-alpha phosphorylation in response to viral infection converts EIF2S1/eIF-2-alpha in a global protein synthesis inhibitor, resulting to a shutdown of cellular and viral protein synthesis, while concomitantly initiating the preferential translation of ISR-specific mRNAs, such as the transcriptional activator ATF4. Exerts its antiviral activity on a wide range of DNA and RNA viruses. Also involved in the regulation of signal transduction, apoptosis, cell proliferation and differentiation: phosphorylates other substrates including p53/TP53, PPP2R5A, DHX9, ILF3 and IRS1. In addition to serine/threonine-protein kinase activity, also has tyrosine-protein kinase activity and phosphorylates CDK1 at 'Tyr-4' upon DNA damage, facilitating its ubiquitination and proteasomal degradation. Either as an adapter protein and/or via its kinase activity, can regulate various signaling pathways (p38 MAP kinase, NF-kappa-B and insulin signaling pathways) and transcription factors (JUN, STAT1, STAT3, IRF1, ATF3) involved in the expression of genes encoding pro-inflammatory cytokines and IFNs. Activates the NF-kappa-B pathway via interaction with IKBKB and TRAF family of proteins and activates the p38 MAP kinase pathway via interaction with MAP2K6. Can act as both a positive and negative regulator of the insulin signaling pathway (ISP). Negatively regulates ISP by inducing the inhibitory phosphorylation of insulin receptor substrate 1 (IRS1) at 'Ser-312' and positively regulates ISP via phosphorylation of PPP2R5A which activates FOXO1, which in turn up-regulates the expression of insulin receptor substrate 2 (IRS2). Can regulate NLRP3 inflammasome assembly and the activation of NLRP3, NLRP1, AIM2 and NLRC4 inflammasomes. Plays a role in the regulation of the cytoskeleton by binding to gelsolin (GSN), sequestering the protein in an inactive conformation away from actin. In Rattus norvegicus (Rat), this protein is Interferon-induced, double-stranded RNA-activated protein kinase (Eif2ak2).